The chain runs to 645 residues: 1-deoxy-D-xylulose-5-phosphate synthase 1 (645 aa).

Residues 1 to 20 form a disordered region; it reads MTDTKTPTLDRVAGPADLRS. Thiamine diphosphate contacts are provided by residues His78 and 119 to 121; that span reads AHS. Mg(2+) is bound at residue Asp150. Residues 151–152, Asn179, Tyr291, and Glu373 contribute to the thiamine diphosphate site; that span reads GS. Residue Asn179 participates in Mg(2+) binding.

This sequence belongs to the transketolase family. DXPS subfamily. Homodimer. The cofactor is Mg(2+). Thiamine diphosphate is required as a cofactor.

It carries out the reaction D-glyceraldehyde 3-phosphate + pyruvate + H(+) = 1-deoxy-D-xylulose 5-phosphate + CO2. Its pathway is metabolic intermediate biosynthesis; 1-deoxy-D-xylulose 5-phosphate biosynthesis; 1-deoxy-D-xylulose 5-phosphate from D-glyceraldehyde 3-phosphate and pyruvate: step 1/1. In terms of biological role, catalyzes the acyloin condensation reaction between C atoms 2 and 3 of pyruvate and glyceraldehyde 3-phosphate to yield 1-deoxy-D-xylulose-5-phosphate (DXP). The chain is 1-deoxy-D-xylulose-5-phosphate synthase 1 from Roseobacter denitrificans (strain ATCC 33942 / OCh 114) (Erythrobacter sp. (strain OCh 114)).